Reading from the N-terminus, the 2162-residue chain is Polyketide synthase 1 (2162 aa).

The segment at 19 to 264 (FVFGDQTSCN…TPLAVHAPYH (246 aa)) is N-terminal acylcarrier protein transacylase domain (SAT). Positions 397–841 (DSKIAIIGMS…GGNTALLVED (445 aa)) constitute a Ketosynthase family 3 (KS3) domain. Active-site for beta-ketoacyl synthase activity residues include Cys-578, His-713, and His-757. The malonyl-CoA:ACP transacylase (MAT) domain stretch occupies residues 941–1245 (AFVFSGQGSQ…PSLMRSHDGW (305 aa)). Residue Ser-1030 is the For acyl/malonyl transferase activity of the active site. Positions 1322–1636 (TASVHRIVRE…RRVLDAAMPA (315 aa)) are product template (PT) domain. Residues 1326-1459 (HRIVRESVDR…SSLCFGESRA (134 aa)) are N-terminal hotdog fold. Residues 1326–1631 (HRIVRESVDR…FQGVPRRVLD (306 aa)) form the PKS/mFAS DH domain. His-1358 acts as the Proton acceptor; for dehydratase activity in catalysis. The interval 1486–1631 (LNSRLSSGVI…FQGVPRRVLD (146 aa)) is C-terminal hotdog fold. The Proton donor; for dehydratase activity role is filled by Asp-1545. Residues 1633–1669 (AMPAPKSPNKTRDHASPNATISRAKPPQGSSPASSAQ) form a disordered region. Positions 1658–1669 (PPQGSSPASSAQ) are enriched in low complexity. A Carrier 1 domain is found at 1692 to 1766 (IDPMHAVLRI…DFAVHLGLDT (75 aa)). Ser-1726 is subject to O-(pantetheine 4'-phosphoryl)serine. A compositionally biased stretch (low complexity) spans 1772–1783 (SSGESNVSGGVS). The disordered stretch occupies residues 1772 to 1809 (SSGESNVSGGVSPRSDSVAAMSSDVTTPPAQSPLGSMS). Positions 1794–1809 (SDVTTPPAQSPLGSMS) are enriched in polar residues. A Carrier 2 domain is found at 1807-1884 (SMSSSPCEDL…SFKHVFEQEI (78 aa)). Ser-1844 is modified (O-(pantetheine 4'-phosphoryl)serine). Residues 1896-2160 (LKKYHATSTL…ERVAAFIRSA (265 aa)) are thioesterase (TE) domain. Residue Ser-1987 is the For thioesterase activity of the active site.

Its function is as follows. Polyketide synthase; part of the Pks1 gene cluster that mediates the biosynthesis of an anthraquinone derivative pigment that contributes to conidial pigmentation that provides protection from UV radiation, heat and cold stress. The polyketide synthase Pks1 produces 1-acetyl-2,4,6,8-tetrahydroxy-9,10-anthraquinone though condensation of acetyl-CoA with malonyl-CoA. The dehydratase EthD and the laccase Mlac1 further convert the anthraquinone derivative into the final conidial pigment. This is Polyketide synthase 1 from Metarhizium album (strain ARSEF 1941).